A 362-amino-acid chain; its full sequence is Formate dehydrogenase (362 aa).

V93 and N119 together coordinate substrate. NAD(+) is bound by residues 174–175 (RI), D195, 230–234 (PLHAG), T256, D282, 311–314 (HYSG), and S357.

The protein belongs to the D-isomer specific 2-hydroxyacid dehydrogenase family. FDH subfamily. As to quaternary structure, homodimer.

It localises to the cytoplasm. It catalyses the reaction formate + NAD(+) = CO2 + NADH. In terms of biological role, catalyzes the NAD(+)-dependent oxidation of formate to carbon dioxide. Formate oxidation is the final step in the methanol oxidation pathway in methylotrophic microorganisms. Has a role in the detoxification of exogenous formate in non-methylotrophic organisms. The protein is Formate dehydrogenase of Pichia angusta (Yeast).